We begin with the raw amino-acid sequence, 176 residues long: Lipoprotein signal peptidase (176 aa).

Helical transmembrane passes span 26–46, 60–80, 82–102, and 107–127; these read LWMAFALLVVVLDQFFKIVIV, FFNLVLVYNKGAAFSFLADAG, WQRWFFTGLGLVVGAFIVWLL, and GQKLFCFAVSLILGGAVGNVV. Catalysis depends on residues D137 and D155. Residues 147–167 traverse the membrane as a helical segment; that stretch reads HWPAFNVADCAITVGAVLLIV.

This sequence belongs to the peptidase A8 family.

It localises to the cell inner membrane. It catalyses the reaction Release of signal peptides from bacterial membrane prolipoproteins. Hydrolyzes -Xaa-Yaa-Zaa-|-(S,diacylglyceryl)Cys-, in which Xaa is hydrophobic (preferably Leu), and Yaa (Ala or Ser) and Zaa (Gly or Ala) have small, neutral side chains.. It participates in protein modification; lipoprotein biosynthesis (signal peptide cleavage). Functionally, this protein specifically catalyzes the removal of signal peptides from prolipoproteins. The sequence is that of Lipoprotein signal peptidase from Cupriavidus pinatubonensis (strain JMP 134 / LMG 1197) (Cupriavidus necator (strain JMP 134)).